The primary structure comprises 725 residues: 1,4-alpha-glucan branching enzyme GlgB (725 aa).

Asp406 serves as the catalytic Nucleophile. Glu459 serves as the catalytic Proton donor.

This sequence belongs to the glycosyl hydrolase 13 family. GlgB subfamily. As to quaternary structure, monomer.

The enzyme catalyses Transfers a segment of a (1-&gt;4)-alpha-D-glucan chain to a primary hydroxy group in a similar glucan chain.. It participates in glycan biosynthesis; glycogen biosynthesis. In terms of biological role, catalyzes the formation of the alpha-1,6-glucosidic linkages in glycogen by scission of a 1,4-alpha-linked oligosaccharide from growing alpha-1,4-glucan chains and the subsequent attachment of the oligosaccharide to the alpha-1,6 position. The protein is 1,4-alpha-glucan branching enzyme GlgB of Methylobacillus flagellatus (strain ATCC 51484 / DSM 6875 / VKM B-1610 / KT).